Reading from the N-terminus, the 2023-residue chain is Protein Daple (2023 aa).

One can recognise a Calponin-homology (CH) domain in the interval 11–131 (NFMDSPLVVW…RMLLLILGCA (121 aa)). Coiled-coil stretches lie at residues 250–415 (RQHL…LLEE), 458–1064 (NESA…VEKN), and 1105–1419 (LKQI…QYKF). The segment at 1013 to 1035 (RHEEEAAHSEISQQTLGQTRSLP) is disordered. A compositionally biased stretch (polar residues) spans 1022–1033 (EISQQTLGQTRS). Disordered stretches follow at residues 1441–1824 (KPKK…GSAS) and 1837–2023 (LRSN…YGCV). Positions 1442-1460 (PKKESSRERPDAPRERIRS) are enriched in basic and acidic residues. Pro residues predominate over residues 1478–1491 (SAPPPPPPPLPPRQ). Polar residues-rich tracts occupy residues 1497-1518 (DSMN…SSPA) and 1564-1585 (TCST…SSSL). Low complexity-rich tracts occupy residues 1623 to 1643 (SAEF…KGSL) and 1667 to 1704 (RLSQ…SPGS). The short motif at 1700–1728 (SSPGSEMVTLEEFLQESNALSPPTVQTGS) is the GBA element. 4 stretches are compositionally biased toward polar residues: residues 1714–1727 (QESN…VQTG), 1752–1763 (TPTNYVTPTVKT), 1785–1799 (LTDT…QTLP), and 1809–1824 (ALQQ…GSAS). A compositionally biased stretch (basic and acidic residues) spans 1890–1904 (VDPRRLSLAQPRDEF). Residues 1927-1945 (GSGSSRAGAARSGSAQPRG) are compositionally biased toward low complexity. Residues 1974-1988 (QEQREAESPLLKKAD) are compositionally biased toward basic and acidic residues. Residues 1989–2014 (TTNLSYASKEQPTSKPASPDPNNDPQ) show a composition bias toward polar residues. The short motif at 2020–2023 (YGCV) is the PDZ-binding element.

This sequence belongs to the CCDC88 family.

It localises to the cytoplasm. The protein localises to the cell junction. Positive regulator of Wnt signaling, acting synergistically with dvl2. Functions upstream of ctnnb1/beta-catenin in the canonical Wnt pathway, and also activates jnk in the Wnt/planar cell polarity (PCP) pathway. Acts as a non-receptor guanine nucleotide exchange factor which binds to and activates guanine nucleotide-binding protein G(i) alpha (Gi-alpha) subunits. This promotes apical cell constriction and subsequent bending of the neural plate during neurulation via arhgef18. This is Protein Daple from Danio rerio (Zebrafish).